A 311-amino-acid chain; its full sequence is MSENQQINQKQQYNLNKLQKRLRRNVGEAIADFNMIEEGDRIMVCLSGGKDSFTMLEILRNLQQSAPVNFSLVAVNLDQKQPGFPEHVLPQYLDSIGVEYKIVEENTYGIVKDKIPEGKTTCSLCSRLRRGILYRTATELGATKIALGHHRDDILQTLFLNMFYGGKLKGMPPKLMSDDGKHVVIRPLAYCREKDIERFAEARQYPIIPCNLCGSQPNLQRQVIKDMLRDWDKRYPGRIETMFSAMQNVVPSHLADHALFDFKGIRHGSDVVDGGDLAFDREELPLQPVGWQPEDDEEAPSLTRLDVLEIK.

The PP-loop motif signature appears at 47–52 (SGGKDS). [4Fe-4S] cluster-binding residues include cysteine 122, cysteine 125, and cysteine 213.

The protein belongs to the TtcA family. Homodimer. Mg(2+) is required as a cofactor. Requires [4Fe-4S] cluster as cofactor.

Its subcellular location is the cytoplasm. The enzyme catalyses cytidine(32) in tRNA + S-sulfanyl-L-cysteinyl-[cysteine desulfurase] + AH2 + ATP = 2-thiocytidine(32) in tRNA + L-cysteinyl-[cysteine desulfurase] + A + AMP + diphosphate + H(+). It functions in the pathway tRNA modification. Functionally, catalyzes the ATP-dependent 2-thiolation of cytidine in position 32 of tRNA, to form 2-thiocytidine (s(2)C32). The sulfur atoms are provided by the cysteine/cysteine desulfurase (IscS) system. The polypeptide is tRNA-cytidine(32) 2-sulfurtransferase (Pectobacterium carotovorum subsp. carotovorum (strain PC1)).